The primary structure comprises 142 residues: Midkine-B (142 aa).

Positions 1 to 20 (MELRAFCVILLITILAVSSQ) are cleaved as a signal peptide. 5 disulfide bridges follow: cysteine 36–cysteine 60, cysteine 44–cysteine 69, cysteine 51–cysteine 73, cysteine 83–cysteine 115, and cysteine 93–cysteine 125.

The protein belongs to the pleiotrophin family. As to expression, in adults, expression is highest in the brain, eye and bone, with lower expression in the heart and lung. Not expressed in the ovary. In the tailbud stage embryo, expressed in the head and tail regions as well as in the central nervous system (CNS).

The protein resides in the secreted. Functionally, secreted protein that functions as a cytokine and growth factor and mediates its signal through cell-surface proteoglycan and non-proteoglycan receptors. Binds cell-surface proteoglycan receptors via their chondroitin sulfate (CS) groups. Thereby regulates many processes like inflammatory response, cell proliferation, cell adhesion, cell growth, cell survival, tissue regeneration, cell differentiation and cell migration. Inhibits mesoderm formation and promotes neural formation during development. Plays a role in development of the neuromuscular junction (NMJ). Has antibacterial activity against both Gram-positive and Gram-negative bacteria. The polypeptide is Midkine-B (mdk-b) (Xenopus laevis (African clawed frog)).